Consider the following 562-residue polypeptide: DNA ligase (562 aa).

An ATP-binding site is contributed by Glu252. Lys254 acts as the N6-AMP-lysine intermediate in catalysis. Arg259, Arg274, Glu303, Phe343, Arg419, and Lys425 together coordinate ATP.

Belongs to the ATP-dependent DNA ligase family. It depends on Mg(2+) as a cofactor.

It catalyses the reaction ATP + (deoxyribonucleotide)n-3'-hydroxyl + 5'-phospho-(deoxyribonucleotide)m = (deoxyribonucleotide)n+m + AMP + diphosphate.. In terms of biological role, DNA ligase that seals nicks in double-stranded DNA during DNA replication, DNA recombination and DNA repair. The chain is DNA ligase from Methanococcus aeolicus (strain ATCC BAA-1280 / DSM 17508 / OCM 812 / Nankai-3).